The following is a 715-amino-acid chain: Fatty acid oxidation complex subunit alpha (715 aa).

An enoyl-CoA hydratase region spans residues 1-190 (MTTTSAFMLN…RAGLVDDVVP (190 aa)). The segment at 306-715 (GPLNSVGILG…WTNGETDQGN (410 aa)) is 3-hydroxyacyl-CoA dehydrogenase.

This sequence in the N-terminal section; belongs to the enoyl-CoA hydratase/isomerase family. In the central section; belongs to the 3-hydroxyacyl-CoA dehydrogenase family. As to quaternary structure, heterotetramer of two alpha chains (FadJ) and two beta chains (FadI).

The protein resides in the cytoplasm. It carries out the reaction a (3S)-3-hydroxyacyl-CoA = a (2E)-enoyl-CoA + H2O. The enzyme catalyses a 4-saturated-(3S)-3-hydroxyacyl-CoA = a (3E)-enoyl-CoA + H2O. It catalyses the reaction a (3S)-3-hydroxyacyl-CoA + NAD(+) = a 3-oxoacyl-CoA + NADH + H(+). The catalysed reaction is (3S)-3-hydroxybutanoyl-CoA = (3R)-3-hydroxybutanoyl-CoA. It participates in lipid metabolism; fatty acid beta-oxidation. In terms of biological role, catalyzes the formation of a hydroxyacyl-CoA by addition of water on enoyl-CoA. Also exhibits 3-hydroxyacyl-CoA epimerase and 3-hydroxyacyl-CoA dehydrogenase activities. This Salmonella schwarzengrund (strain CVM19633) protein is Fatty acid oxidation complex subunit alpha.